A 303-amino-acid polypeptide reads, in one-letter code: MAGAACEPVARPSLTSISSGELRSLWTCDCELALLPLAQLLRLQPGAFQLSGDQLVVARPGEPAAARGGFNVFGDGLVRLDGQLYRLSSYIKRYVELTNYCDYKDYRETILSKPMLFFINVQTKKDTSKERTYAFLVNTRHPKIRRQIEQGMDMVISSVIGESYRLQFDFQEAVKNFFPPGNEVVNGENLSFAYEFKADALFDFFYWFGLSNSVVKVNGKVLNLSSTSPEKKETIKLFLEKMSEPLIRRSSFSDRKFSVTSRGSIDDVFNCNLSPRSSLTEPLLAELPFPSVLESEETPNQFI.

As to expression, highly expressed in the visceral fat depot.

The protein localises to the cytoplasm. In terms of biological role, involved in processes that promote adipocyte differentiation, lipid accumulation, and glucose uptake in mature adipocytes. The chain is Mesenteric estrogen-dependent adipogenesis protein (MEDAG) from Homo sapiens (Human).